The following is a 177-amino-acid chain: Ribulose bisphosphate carboxylase small subunit, chloroplastic 3 (177 aa).

Residues 1 to 56 (MASSMMASTAAAVARAGPAQSSMVPFNACRSSVPFPATRKANNNLSTLPGNGGRVS) constitute a chloroplast transit peptide.

Belongs to the RuBisCO small chain family. As to quaternary structure, heterohexadecamer of 8 large and 8 small subunits.

It is found in the plastid. The protein resides in the chloroplast. Its function is as follows. RuBisCO catalyzes two reactions: the carboxylation of D-ribulose 1,5-bisphosphate, the primary event in carbon dioxide fixation, as well as the oxidative fragmentation of the pentose substrate. Both reactions occur simultaneously and in competition at the same active site. Although the small subunit is not catalytic it is essential for maximal activity. This is Ribulose bisphosphate carboxylase small subunit, chloroplastic 3 from Lemna gibba (Swollen duckweed).